Here is a 305-residue protein sequence, read N- to C-terminus: Ornithine carbamoyltransferase (305 aa).

Carbamoyl phosphate is bound by residues 52 to 55 (STRT), glutamine 79, arginine 103, and 130 to 133 (HPCQ). L-ornithine-binding positions include asparagine 161, aspartate 222, and 226–227 (SM). Carbamoyl phosphate-binding positions include 262 to 263 (CL) and arginine 290.

The protein belongs to the aspartate/ornithine carbamoyltransferase superfamily. OTCase family.

It localises to the cytoplasm. The enzyme catalyses carbamoyl phosphate + L-ornithine = L-citrulline + phosphate + H(+). It functions in the pathway amino-acid biosynthesis; L-arginine biosynthesis; L-arginine from L-ornithine and carbamoyl phosphate: step 1/3. Functionally, reversibly catalyzes the transfer of the carbamoyl group from carbamoyl phosphate (CP) to the N(epsilon) atom of ornithine (ORN) to produce L-citrulline. In Pelobacter propionicus (strain DSM 2379 / NBRC 103807 / OttBd1), this protein is Ornithine carbamoyltransferase.